Consider the following 172-residue polypeptide: Translation initiation factor IF-3 (172 aa).

It belongs to the IF-3 family. In terms of assembly, monomer.

The protein resides in the cytoplasm. In terms of biological role, IF-3 binds to the 30S ribosomal subunit and shifts the equilibrium between 70S ribosomes and their 50S and 30S subunits in favor of the free subunits, thus enhancing the availability of 30S subunits on which protein synthesis initiation begins. The polypeptide is Translation initiation factor IF-3 (Campylobacter concisus (strain 13826)).